The chain runs to 118 residues: Co-chaperonin GroES (118 aa).

This sequence belongs to the GroES chaperonin family. In terms of assembly, heptamer of 7 subunits arranged in a ring. Interacts with the chaperonin GroEL.

It localises to the cytoplasm. Together with the chaperonin GroEL, plays an essential role in assisting protein folding. The GroEL-GroES system forms a nano-cage that allows encapsulation of the non-native substrate proteins and provides a physical environment optimized to promote and accelerate protein folding. GroES binds to the apical surface of the GroEL ring, thereby capping the opening of the GroEL channel. The protein is Co-chaperonin GroES of Helicobacter pylori (strain P12).